Reading from the N-terminus, the 459-residue chain is Siroheme synthase (459 aa).

The precorrin-2 dehydrogenase /sirohydrochlorin ferrochelatase stretch occupies residues 1–204; that stretch reads MDHLPIFCQL…ADEKAVNATT (204 aa). Residues 22–23 and 43–44 each bind NAD(+); these read DV and LT. Ser128 carries the post-translational modification Phosphoserine. Residues 216 to 459 are uroporphyrinogen-III C-methyltransferase; the sequence is GEVVLVGAGP…KLNWFSNYYD (244 aa). S-adenosyl-L-methionine is bound at residue Pro225. Catalysis depends on Asp248, which acts as the Proton acceptor. The Proton donor role is filled by Lys270. Residues 301–303, Ile306, 331–332, Met382, and Gly411 contribute to the S-adenosyl-L-methionine site; these read GGD and TA.

In the N-terminal section; belongs to the precorrin-2 dehydrogenase / sirohydrochlorin ferrochelatase family. The protein in the C-terminal section; belongs to the precorrin methyltransferase family.

It catalyses the reaction uroporphyrinogen III + 2 S-adenosyl-L-methionine = precorrin-2 + 2 S-adenosyl-L-homocysteine + H(+). The catalysed reaction is precorrin-2 + NAD(+) = sirohydrochlorin + NADH + 2 H(+). The enzyme catalyses siroheme + 2 H(+) = sirohydrochlorin + Fe(2+). The protein operates within cofactor biosynthesis; adenosylcobalamin biosynthesis; precorrin-2 from uroporphyrinogen III: step 1/1. It functions in the pathway cofactor biosynthesis; adenosylcobalamin biosynthesis; sirohydrochlorin from precorrin-2: step 1/1. It participates in porphyrin-containing compound metabolism; siroheme biosynthesis; precorrin-2 from uroporphyrinogen III: step 1/1. Its pathway is porphyrin-containing compound metabolism; siroheme biosynthesis; siroheme from sirohydrochlorin: step 1/1. The protein operates within porphyrin-containing compound metabolism; siroheme biosynthesis; sirohydrochlorin from precorrin-2: step 1/1. In terms of biological role, multifunctional enzyme that catalyzes the SAM-dependent methylations of uroporphyrinogen III at position C-2 and C-7 to form precorrin-2 via precorrin-1. Then it catalyzes the NAD-dependent ring dehydrogenation of precorrin-2 to yield sirohydrochlorin. Finally, it catalyzes the ferrochelation of sirohydrochlorin to yield siroheme. This is Siroheme synthase from Salmonella agona (strain SL483).